The sequence spans 43 residues: uncharacterized protein (43 aa).

A disordered region spans residues 1–43 (MFKSRIETGGFQFQVHGDDESAMDDEFIDDDDDQQVVEPVTDN). Positions 20–35 (ESAMDDEFIDDDDDQQ) are enriched in acidic residues.

This is an uncharacterized protein from Dictyostelium discoideum (Social amoeba).